Here is an 848-residue protein sequence, read N- to C-terminus: Aryl hydrocarbon receptor (848 aa).

The propeptide occupies 1–9 (MSSGANITY). Positions 1 to 38 (MSSGANITYASRKRRKPVQKTVKPIPAEGIKSNPSKRH) are disordered. Short sequence motifs (nuclear localization signal) lie at residues 12 to 15 (RKRR) and 36 to 41 (KRHRDR). The bHLH domain occupies 26-79 (PAEGIKSNPSKRHRDRLNTELDRLASLLPFPQDVINKLDKLSVLRLSVSYLRAK). Positions 37–65 (RHRDRLNTELDRLASLLPFPQDVINKLDK) are DNA-binding. Required for maintaining the overall integrity of the AHR:ARNT heterodimer and its transcriptional activity regions lie at residues 49 to 81 (LASL…AKSF), 116 to 124 (LLQALNGFV), and 260 to 262 (FAI). The Nuclear export signal motif lies at 63-71 (LDKLSVLRL). The PAS 1 domain maps to 111 to 175 (QEGEFLLQAL…AEFQRQLHWA (65 aa)). One can recognise a PAS 2 domain in the interval 266-336 (LQPPSILEIR…CAESHIRMIK (71 aa)). The region spanning 342–383 (MTVFRLLAKHSRWRWVQSNARLIYRNGRPDYIIVTQRPLTDE) is the PAC domain. The disordered stretch occupies residues 421–449 (LPIRTKSNTSRKDWAPQSTPSKDSFHPSS). Positions 436 to 449 (PQSTPSKDSFHPSS) are enriched in polar residues.

As to quaternary structure, homodimer. Heterodimer; efficient DNA binding requires dimerization with another bHLH protein. Interacts with ARNT; the heterodimer ARNT:AHR binds to core DNA sequence 5'-TGCGTG-3' within the dioxin response element (DRE) of target gene promoters and activates their transcription. Binds MYBBP1A. Interacts with coactivators including SRC-1, RIP140 and NOCA7, and with the corepressor SMRT. Interacts with NEDD8 and IVNS1ABP. Interacts with BMAL1. Interacts with HSP90AB1. Interacts with TIPARP; leading to mono-ADP-ribosylation of AHR and subsequent inhibition of AHR. Mono-ADP-ribosylated, leading to inhibit transcription activator activity of AHR.

It is found in the cytoplasm. The protein resides in the nucleus. Its function is as follows. Ligand-activated transcription factor that enables cells to adapt to changing conditions by sensing compounds from the environment, diet, microbiome and cellular metabolism, and which plays important roles in development, immunity and cancer. Upon ligand binding, translocates into the nucleus, where it heterodimerizes with ARNT and induces transcription by binding to xenobiotic response elements (XRE). Regulates a variety of biological processes, including angiogenesis, hematopoiesis, drug and lipid metabolism, cell motility and immune modulation. Xenobiotics can act as ligands: upon xenobiotic-binding, activates the expression of multiple phase I and II xenobiotic chemical metabolizing enzyme genes (such as the CYP1A1 gene). Mediates biochemical and toxic effects of halogenated aromatic hydrocarbons. Next to xenobiotics, natural ligands derived from plants, microbiota, and endogenous metabolism are potent AHR agonists. Tryptophan (Trp) derivatives constitute an important class of endogenous AHR ligands. Acts as a negative regulator of anti-tumor immunity: indoles and kynurenic acid generated by Trp catabolism act as ligand and activate AHR, thereby promoting AHR-driven cancer cell motility and suppressing adaptive immunity. Regulates the circadian clock by inhibiting the basal and circadian expression of the core circadian component PER1. Inhibits PER1 by repressing the CLOCK-BMAL1 heterodimer mediated transcriptional activation of PER1. The heterodimer ARNT:AHR binds to core DNA sequence 5'-TGCGTG-3' within the dioxin response element (DRE) of target gene promoters and activates their transcription. The polypeptide is Aryl hydrocarbon receptor (Ahr) (Mus musculus castaneus (Southeastern Asian house mouse)).